The primary structure comprises 758 residues: Dolichyl-phosphooligosaccharide-protein glycotransferase 2 (758 aa).

The Cytoplasmic portion of the chain corresponds to 1–6; sequence MKRRYS. The helical transmembrane segment at 7-27 threads the bilayer; sequence ILIILLVAIFYRMITFRFKYL. At 28-92 the chain is on the extracellular side; the sequence is LGYDPYFHLA…KVFGVSLTTT (65 aa). The DXD motif 1 signature appears at 29 to 31; it reads GYD. Residue aspartate 31 participates in Mn(2+) binding. A helical membrane pass occupies residues 93 to 113; it reads FKITPVIFGVLTVIFLYLSLL. Over 114-120 the chain is Cytoplasmic; it reads KLYDEKR. Residues 121–141 traverse the membrane as a helical segment; the sequence is AFFGGFFLAISYGHVFRSMAN. At 142-145 the chain is on the extracellular side; the sequence is YYRG. Residues arginine 144 and aspartate 146 each contribute to the Mn(2+) site. Residues 144-146 carry the DXD motif 2 motif; that stretch reads RGD. The chain crosses the membrane as a helical span at residues 146-166; it reads DNYMLFWYSVALLGISLALGI. At 167–175 the chain is on the cytoplasmic side; it reads KKGKWKYKR. A run of 2 helical transmembrane segments spans residues 176-196 and 197-217; these read LIFYTLPVLASGFSAIFWQAY and YPIFAFLLSNALLLAVGAFIL. Over 218–226 the chain is Cytoplasmic; the sequence is KKDKYLLDS. The chain crosses the membrane as a helical span at residues 227–247; sequence IILILSTAFGVLLANYLGGIF. The Extracellular segment spans residues 248–281; it reads GYGMLGYAKWLGKSVAKKLGLEFGYLKDVYLILH. A helical transmembrane segment spans residues 282–302; it reads LKYLVPISLSFVLVLILLGFL. The Cytoplasmic portion of the chain corresponds to 303-310; that stretch reads TKDIRIRS. Residues 311 to 331 traverse the membrane as a helical segment; the sequence is LFLGIASFIGIIILFKRFEAL. Residues 332-352 are Extracellular-facing; the sequence is KELSTGFGIFKEAPILETQPT. Residues 340–343 carry the TIXE motif motif; the sequence is IFKE. The chain crosses the membrane as a helical span at residues 353–373; the sequence is SFKDLWAAFSLSFFLTPLFFI. The Cytoplasmic segment spans residues 374-379; that stretch reads RFKKPR. Residues 380-400 traverse the membrane as a helical segment; it reads VEDFLTLGLIIPSVYMLKTWT. A topological domain (extracellular) is located at residue arginine 401. Arginine 401 lines the a glycophospholipid pocket. Residues 402–422 form a helical membrane-spanning segment; the sequence is FLFIGSMAIAIMSGIGIVELY. Residues 423 to 433 are Cytoplasmic-facing; sequence EAIKPRLNGKK. The chain crosses the membrane as a helical span at residues 434–454; it reads ALATGIITLVILPGVIAGLSF. The Extracellular portion of the chain corresponds to 455–758; it reads KEVCSLHPEM…DRGVFRLSYN (304 aa). The interacts with target acceptor peptide in protein substrate stretch occupies residues 488-490; it reads WWD. Residues 488–492 carry the WWDYG motif motif; that stretch reads WWDWG. Positions 540 to 547 match the DK motif motif; sequence DFLKFGAI.

Belongs to the STT3 family. Mn(2+) serves as cofactor. Mg(2+) is required as a cofactor.

Its subcellular location is the cell membrane. It carries out the reaction an archaeal dolichyl phosphooligosaccharide + [protein]-L-asparagine = an archaeal dolichyl phosphate + a glycoprotein with the oligosaccharide chain attached by N-beta-D-glycosyl linkage to a protein L-asparagine.. The protein operates within protein modification; protein glycosylation. Its function is as follows. Oligosaccharyl transferase (OST) that catalyzes the initial transfer of a defined glycan (ManNAcXyl(2)GlcAMan(2)GalNAc in Pyrococcus) from the lipid carrier dolichol-monophosphate to an asparagine residue within an Asn-X-Ser/Thr consensus motif in nascent polypeptide chains, the first step in protein N-glycosylation. This Pyrococcus horikoshii (strain ATCC 700860 / DSM 12428 / JCM 9974 / NBRC 100139 / OT-3) protein is Dolichyl-phosphooligosaccharide-protein glycotransferase 2 (aglB2).